Here is a 332-residue protein sequence, read N- to C-terminus: Ketol-acid reductoisomerase (NADP(+)) (332 aa).

One can recognise a KARI N-terminal Rossmann domain in the interval 3 to 183 (TEIFYDADAD…GGARAGVIKT (181 aa)). Residues 26–29 (YGSQ), serine 52, serine 54, and 84–87 (DTKQ) each bind NADP(+). Histidine 109 is an active-site residue. Glycine 135 contributes to the NADP(+) binding site. The KARI C-terminal knotted domain maps to 184–329 (TFTEETETDL…KKLRSLMSWT (146 aa)). Mg(2+) is bound by residues aspartate 192, glutamate 196, glutamate 228, and glutamate 232. Serine 253 is a substrate binding site.

Belongs to the ketol-acid reductoisomerase family. The cofactor is Mg(2+).

It carries out the reaction (2R)-2,3-dihydroxy-3-methylbutanoate + NADP(+) = (2S)-2-acetolactate + NADPH + H(+). It catalyses the reaction (2R,3R)-2,3-dihydroxy-3-methylpentanoate + NADP(+) = (S)-2-ethyl-2-hydroxy-3-oxobutanoate + NADPH + H(+). It functions in the pathway amino-acid biosynthesis; L-isoleucine biosynthesis; L-isoleucine from 2-oxobutanoate: step 2/4. It participates in amino-acid biosynthesis; L-valine biosynthesis; L-valine from pyruvate: step 2/4. Its function is as follows. Involved in the biosynthesis of branched-chain amino acids (BCAA). Catalyzes an alkyl-migration followed by a ketol-acid reduction of (S)-2-acetolactate (S2AL) to yield (R)-2,3-dihydroxy-isovalerate. In the isomerase reaction, S2AL is rearranged via a Mg-dependent methyl migration to produce 3-hydroxy-3-methyl-2-ketobutyrate (HMKB). In the reductase reaction, this 2-ketoacid undergoes a metal-dependent reduction by NADPH to yield (R)-2,3-dihydroxy-isovalerate. In Saccharopolyspora erythraea (strain ATCC 11635 / DSM 40517 / JCM 4748 / NBRC 13426 / NCIMB 8594 / NRRL 2338), this protein is Ketol-acid reductoisomerase (NADP(+)).